A 235-amino-acid polypeptide reads, in one-letter code: High affinity immunoglobulin epsilon receptor subunit beta (235 aa).

The disordered stretch occupies residues 1 to 23 (MDTENRSRADLALPNPQESSSAP). The Cytoplasmic segment spans residues 1-51 (MDTENRSRADLALPNPQESSSAPDIELLEASPAKAAPPKQTWRTFLKKELE). A helical transmembrane segment spans residues 52–71 (FLGATQILVGLICLCFGTIV). Residues 72-89 (CSVLYVSDFDEEVLLLYK) are Extracellular-facing. A helical transmembrane segment spans residues 90-109 (LGYPFWGAVLFVLSGFLSII). Topologically, residues 110 to 122 (SERKNTLYLVRGS) are cytoplasmic. Residues 123–142 (LGANIVSSIAAGTGIAMLIL) form a helical membrane-spanning segment. Over 143–171 (NLTNNFAYMNNCKNVTEDDGCFVASFTTE) the chain is Extracellular. The helical transmembrane segment at 172 to 191 (LVLMMLFLTILAFCSAVLFT) threads the bilayer. At 192–235 (IYRIGQELESKKVPDDRLYEELNVYSPIYSELEDKGETSSPVDS) the chain is on the cytoplasmic side. 2 positions are modified to phosphotyrosine: Tyr210 and Tyr216. At Ser217 the chain carries Phosphoserine. At Tyr220 the chain carries Phosphotyrosine.

The protein belongs to the MS4A family. Tetramer of an alpha chain, a beta chain, and two disulfide linked gamma chains. Binds LILRB1. Interacts with FGR. Interacts with FGR and FES/FPS. Interacts with LYN. In terms of processing, phosphorylated on tyrosine residues by LYN.

The protein resides in the membrane. Its function is as follows. High affinity receptor that binds to the Fc region of immunoglobulins epsilon. Aggregation of FCER1 by multivalent antigens is required for the full mast cell response, including the release of preformed mediators (such as histamine) by degranulation and de novo production of lipid mediators and cytokines. Also mediates the secretion of important lymphokines. Binding of allergen to receptor-bound IgE leads to cell activation and the release of mediators responsible for the manifestations of allergy. The chain is High affinity immunoglobulin epsilon receptor subunit beta (Ms4a2) from Mus musculus (Mouse).